Here is a 601-residue protein sequence, read N- to C-terminus: Coronin-like protein crn1 (601 aa).

WD repeat units lie at residues glycine 79–glutamate 119, glycine 132–serine 172, lysine 174–valine 213, alanine 220–glycine 260, and aspartate 266–leucine 306. Disordered stretches follow at residues serine 361–glutamine 386 and serine 407–lysine 540. Composition is skewed to basic and acidic residues over residues lysine 419–lysine 429, lysine 437–valine 453, and lysine 462–phenylalanine 495. Residues serine 500 and serine 501 each carry the phosphoserine modification. Basic and acidic residues predominate over residues glutamate 507–proline 526. Serine 553 bears the Phosphoserine mark. Residues asparagine 556 to cysteine 600 are a coiled coil.

Belongs to the WD repeat coronin family. As to quaternary structure, binds to F-actin.

This Schizosaccharomyces pombe (strain 972 / ATCC 24843) (Fission yeast) protein is Coronin-like protein crn1 (crn1).